Consider the following 203-residue polypeptide: V-type ATP synthase subunit D (203 aa).

Belongs to the V-ATPase D subunit family.

Produces ATP from ADP in the presence of a proton gradient across the membrane. In Streptococcus pneumoniae (strain Hungary19A-6), this protein is V-type ATP synthase subunit D.